Consider the following 121-residue polypeptide: Flagellar protein FliT (121 aa).

Residues 1–50 (MNHAPHLYFAWQQLVEKSQLMLRLATEEQWDELIASEMAYVNAVQEIAHL) form a required for homodimerization region. Positions 60–98 (MQEQLRPMLRLILDNESKVKQLLQIRMDELAKLVGQSSV) are fliD binding.

The protein belongs to the FliT family. In terms of assembly, homodimer. Interacts with FliD and FlhC.

It is found in the cytoplasm. The protein resides in the cytosol. In terms of biological role, dual-function protein that regulates the transcription of class 2 flagellar operons and that also acts as an export chaperone for the filament-capping protein FliD. As a transcriptional regulator, acts as an anti-FlhDC factor; it directly binds FlhC, thus inhibiting the binding of the FlhC/FlhD complex to class 2 promoters, resulting in decreased expression of class 2 flagellar operons. As a chaperone, effects FliD transition to the membrane by preventing its premature polymerization, and by directing it to the export apparatus. The polypeptide is Flagellar protein FliT (Escherichia coli O157:H7).